The following is a 783-amino-acid chain: MGDEKDSWKVKTLDEILQEKKRRKEQEEKAEIKRLKNSDDRDSKRDSLEEGELRDHCMEITIRNSPYRREDSMEDRGEEDDSLAIKPPQQMSRKEKVHHRKDEKRKEKWKHARVKEREHERRKRHREEQDKARREWERQKRREMAREHSRRERDRLEQLERKRERERKMREQQKEQREQKERERRAEERRKEREARREVSAHHRTMREDYSDKVKASHWSRSPPRPPRERFELGDGRKPGEARPAPAQKPAQLKEEKMEERDLLSDLQDISDSERKTSSAESSSAESGSGSEEEEEEEEEEEEEGSTSEESEEEEEEEEEEEEETGSNSEEASEQSAEEVSEEEMSEDEERENENHLLVVPESRFDRDSGESEEAEEEVGEGTPQSSALTEGDYVPDSPALLPIELKQELPKYLPALQGCRSVEEFQCLNRIEEGTYGVVYRAKDKKTDEIVALKRLKMEKEKEGFPITSLREINTILKAQHPNIVTVREIVVGSNMDKIYIVMNYVEHDLKSLMETMKQPFLPGEVKTLMIQLLRGVKHLHDNWILHRDLKTSNLLLSHAGILKVGDFGLAREYGSPLKAYTPVVVTQWYRAPELLLGAKEYSTAVDMWSVGCIFGELLTQKPLFPGNSEIDQINKVFKELGTPSEKIWPGYSELPVVKKMTFSEHPYNNLRKRFGALLSDQGFDLMNKFLTYFPGRRISAEDGLKHEYFRETPLPIDPSMFPTWPAKSEQQRVKRGTSPRPPEGGLGYSQLGDDDLKETGFHLTTTNQGASAAGPGFSLKF.

Over residues 18–58 (QEKKRRKEQEEKAEIKRLKNSDDRDSKRDSLEEGELRDHCM) the composition is skewed to basic and acidic residues. Positions 18-396 (QEKKRRKEQE…SALTEGDYVP (379 aa)) are disordered. Ser-47 and Ser-72 each carry phosphoserine. A compositionally biased stretch (basic residues) spans 95-125 (EKVHHRKDEKRKEKWKHARVKEREHERRKRH). Composition is skewed to basic and acidic residues over residues 126-215 (REEQ…DKVK), 226-241 (PPRE…KPGE), and 252-264 (QLKE…RDLL). Residue Ser-271 is modified to Phosphoserine. Residues 279-290 (SAESSSAESGSG) are compositionally biased toward low complexity. Composition is skewed to acidic residues over residues 291–352 (SEEE…EERE) and 371–380 (ESEEAEEEVG). The 221-residue stretch at 427–647 (QCLNRIEEGT…VFKELGTPSE (221 aa)) folds into the Protein kinase domain. ATP is bound by residues 432 to 440 (IEEGTYGVV) and Lys-455. Ser-470 carries the phosphoserine; by CDK7 modification. Thr-476 bears the Phosphothreonine; by CDK7 mark. Asp-550 functions as the Proton acceptor in the catalytic mechanism. Phosphoserine is present on Ser-577. Position 582 is a phosphotyrosine (Tyr-582). Phosphothreonine is present on residues Thr-583 and Thr-739. The segment at 721–783 (SMFPTWPAKS…AAGPGFSLKF (63 aa)) is disordered. Ser-740 is modified (phosphoserine).

Belongs to the protein kinase superfamily. CMGC Ser/Thr protein kinase family. CDC2/CDKX subfamily. As to quaternary structure, the cleaved p110 isoform, p110C, binds to the serine/threonine kinase PAK1. The p58 isoform but not the p110 isoform or p110C interacts with CCND3. The p110 isoforms are found in large molecular weight complexes containing CCNL1 and SFRS7. The cofactor is Mg(2+). Post-translationally, during apoptosis, induced by Fas or tumor necrosis factor, specific CKD11 p110 isoforms are cleaved by caspases to produce a protein (p110C) that contains the C-terminal kinase domain of the CDK11 proteins. In terms of tissue distribution, expressed ubiquitously. Some evidence of isoform-specific tissue distribution.

The protein resides in the cytoplasm. It localises to the nucleus. The enzyme catalyses L-seryl-[protein] + ATP = O-phospho-L-seryl-[protein] + ADP + H(+). It catalyses the reaction L-threonyl-[protein] + ATP = O-phospho-L-threonyl-[protein] + ADP + H(+). Its activity is regulated as follows. Phosphorylation at Thr-436 or Tyr-437 inactivates the enzyme, while phosphorylation at Thr-583 activates it. In terms of biological role, appears to play multiple roles in cell cycle progression, cytokinesis and apoptosis. The p110 isoforms have been suggested to be involved in pre-mRNA splicing, potentially by phosphorylating the splicing protein SFRS7. The p58 isoform may act as a negative regulator of normal cell cycle progression. This Homo sapiens (Human) protein is Cyclin-dependent kinase 11A (CDK11A).